Consider the following 41-residue polypeptide: MGKKHRNRITGQKKNNHIPEKDIIAAEEAHGKEYSAAKRKP.

The segment at 1–41 (MGKKHRNRITGQKKNNHIPEKDIIAAEEAHGKEYSAAKRKP) is disordered. The segment covering 17-41 (HIPEKDIIAAEEAHGKEYSAAKRKP) has biased composition (basic and acidic residues).

This is an uncharacterized protein from Bacillus subtilis (strain 168).